The sequence spans 134 residues: UPF0357 protein AAL017W (134 aa).

The first 23 residues, 1–23 (MFGLISLWHLFWLAVMAGILVVA), serve as a signal peptide directing secretion.

Belongs to the UPF0357 family.

The protein is UPF0357 protein AAL017W of Eremothecium gossypii (strain ATCC 10895 / CBS 109.51 / FGSC 9923 / NRRL Y-1056) (Yeast).